A 365-amino-acid chain; its full sequence is Protein BIIDXI (365 aa).

The signal sequence occupies residues 1–21 (MKEMGVIVLLLLHSFFYVAFC). N-linked (GlcNAc...) asparagine glycosylation is found at asparagine 48, asparagine 121, and asparagine 208.

As to quaternary structure, interacts with PME3. Mainly expressed in vascular tissues of roots, leaves, stamens and petals.

Its subcellular location is the secreted. The protein resides in the cell wall. Its function is as follows. Together with At5g11420, acts as a positive regulator of PME3 activity during several developmental processes, including reproductive organ development, hypocotyls elongation, seed germination and endosperm (testa) rupture at the micropyle, probably by modulating the pectin methylation status in cell walls. Involved in the regulation of pectin methylation degree to modulate cell wall physiology during cell separation, hypocotyl growth and embryo development. Required during embryo development, especially to regulate homogalacturonans (HG) methyl esterification in endosperm cell walls, a process related to embryo bending. Also implicated in hypocotyl growth and gravitropic response via the regulation of auxin efflux. Also regulates cell wall pectin upon root-knot nematode Meloidogyne incognita infection. The chain is Protein BIIDXI from Arabidopsis thaliana (Mouse-ear cress).